We begin with the raw amino-acid sequence, 287 residues long: mRNA-capping enzyme regulatory subunit (287 aa).

It belongs to the chordopoxvirinae mRNA-capping enzyme regulatory subunit family. Heterodimer of a catalytic and a regulatory subunit. Intrinsic methyltransferase activity of the catalytic subunit is weak and needs to be stimulated 30- to 50-fold by the regulatory subunit, which is itself catalytically inert.

It is found in the virion. Functionally, regulatory subunit of the mRNA cap enzyme which stabilizes the catalytic subunit and enhances its methyltransferase activity through an allosteric mechanism. Heterodimeric mRNA capping enzyme catalyzes the linkage of a N7-methyl-guanosine moiety to the first transcribed nucleotide (cap 0 structure), whereas the polymerase associated VP39 is responsible for a second methylation at the 2'-O position of the ribose (cap 1 structure). The heterodimeric enzyme is also involved in early viral gene transcription termination and intermediate viral gene transcription initiation. Early gene transcription termination requires the termination factor VTF, the DNA-dependent ATPase NPH-I and the Rap94 subunit of the viral RNA polymerase, as well as the presence of a specific termination motif. Binds, together with RAP94, to the termination motif 5'-UUUUUNU-3' in the nascent early mRNA. This chain is mRNA-capping enzyme regulatory subunit, found in Vaccinia virus (strain Ankara) (VACV).